Consider the following 135-residue polypeptide: UPF0102 protein PGN_1801 (135 aa).

It belongs to the UPF0102 family.

This chain is UPF0102 protein PGN_1801, found in Porphyromonas gingivalis (strain ATCC 33277 / DSM 20709 / CIP 103683 / JCM 12257 / NCTC 11834 / 2561).